Consider the following 556-residue polypeptide: Formate--tetrahydrofolate ligase (556 aa).

65–72 (TPAGEGKS) contributes to the ATP binding site.

The protein belongs to the formate--tetrahydrofolate ligase family.

It catalyses the reaction (6S)-5,6,7,8-tetrahydrofolate + formate + ATP = (6R)-10-formyltetrahydrofolate + ADP + phosphate. Its pathway is one-carbon metabolism; tetrahydrofolate interconversion. This is Formate--tetrahydrofolate ligase from Natranaerobius thermophilus (strain ATCC BAA-1301 / DSM 18059 / JW/NM-WN-LF).